The sequence spans 577 residues: MNIQALLSEKVRQAMIAAGAPADCEPQIRQSAKVQFGDYQANGMMAVAKKLGMAPRQLAEQVLTHLDLNGIASKVEIAGPGFINIFLDPAFLAEHVQQALASDRLGVATPEKQTIVVDYSAPNVAKEMHVGHLRSTIIGDTAVRTLEFLGHKVIRANHVGDWGTQFGMLIAWLEKQQQENAGEMELADLEGFYRDAKKHYDEDEEFAERARNYVVKLQSGDEYFREMWRKLVDITMTQNQITYDRLNVTLTRDDVMGESLYNPMLPGIVADLKAKGLAVESEGATVVFLDEFKNKEGEPMGVIIQKKDGGYLYTTTDIACAKYRYETLHADRVLYYIDSRQHQHLMQAWAIVRKAGYVPESVPLEHHMFGMMLGKDGKPFKTRAGGTVKLADLLDEALERARRLVAEKNPYMPADELEKLANAVGIGAVKYADLSKNRTTDYIFDWDNMLAFEGNTAPYMQYAYTRVLSVFRKAEINEEQLAAAPVIIREDREAQLAARLLQFEETLTVVAREGTPHVMCAYLYDLAGLFSGFYEHCPILSAENEEVRNSRLKLAQLTAKTLKLGLDTLGIETVERM.

The 'HIGH' region motif lies at 122-132; that stretch reads PNVAKEMHVGH.

The protein belongs to the class-I aminoacyl-tRNA synthetase family. As to quaternary structure, monomer.

It localises to the cytoplasm. It catalyses the reaction tRNA(Arg) + L-arginine + ATP = L-arginyl-tRNA(Arg) + AMP + diphosphate. This is Arginine--tRNA ligase from Shigella flexneri serotype 5b (strain 8401).